The following is a 299-amino-acid chain: MKRQLEAYCAHLRNERQVSEHTSQGYRRDLEKVIAYCEEHGIADWQALQIQQLRQLIARLHHHGQSPRSLARLLSAVRGLYRYLNREGLCQHDPANGLSAPKGERRLPKVLDTDRALQLLDGGVDDDFIARRDQAILELFYSSGLRLSELTNLDLDHLDLAAGLVQVLGKGGKARVLPVGRKAREALQAWYRLRGIGNPRDRAVFITRQGNRISPRAVRLRVKVAGERELGQHLHPHMLRHSFASHVLESSQDLRAVQEMLGHADISTTQIYTHLDFQHLAAVYDSAHPRAKRSKGTDS.

Positions 1-85 (MKRQLEAYCA…AVRGLYRYLN (85 aa)) constitute a Core-binding (CB) domain. The Tyr recombinase domain occupies 106 to 285 (RLPKVLDTDR…DFQHLAAVYD (180 aa)). Catalysis depends on residues R146, K170, H237, R240, and H263. The active-site O-(3'-phospho-DNA)-tyrosine intermediate is the Y272.

Belongs to the 'phage' integrase family. XerC subfamily. In terms of assembly, forms a cyclic heterotetrameric complex composed of two molecules of XerC and two molecules of XerD.

It is found in the cytoplasm. Site-specific tyrosine recombinase, which acts by catalyzing the cutting and rejoining of the recombining DNA molecules. The XerC-XerD complex is essential to convert dimers of the bacterial chromosome into monomers to permit their segregation at cell division. It also contributes to the segregational stability of plasmids. The protein is Tyrosine recombinase XerC of Pseudomonas putida (strain ATCC 47054 / DSM 6125 / CFBP 8728 / NCIMB 11950 / KT2440).